The primary structure comprises 577 residues: 2-succinyl-5-enolpyruvyl-6-hydroxy-3-cyclohexene-1-carboxylate synthase (577 aa).

Belongs to the TPP enzyme family. MenD subfamily. In terms of assembly, homodimer. Requires Mg(2+) as cofactor. It depends on Mn(2+) as a cofactor. Thiamine diphosphate is required as a cofactor.

The catalysed reaction is isochorismate + 2-oxoglutarate + H(+) = 5-enolpyruvoyl-6-hydroxy-2-succinyl-cyclohex-3-ene-1-carboxylate + CO2. The protein operates within quinol/quinone metabolism; 1,4-dihydroxy-2-naphthoate biosynthesis; 1,4-dihydroxy-2-naphthoate from chorismate: step 2/7. It functions in the pathway quinol/quinone metabolism; menaquinone biosynthesis. In terms of biological role, catalyzes the thiamine diphosphate-dependent decarboxylation of 2-oxoglutarate and the subsequent addition of the resulting succinic semialdehyde-thiamine pyrophosphate anion to isochorismate to yield 2-succinyl-5-enolpyruvyl-6-hydroxy-3-cyclohexene-1-carboxylate (SEPHCHC). The chain is 2-succinyl-5-enolpyruvyl-6-hydroxy-3-cyclohexene-1-carboxylate synthase from Geobacillus kaustophilus (strain HTA426).